Here is a 993-residue protein sequence, read N- to C-terminus: Vacuolar membrane protease (993 aa).

Residues 1 to 24 (MSPAMANPRVRKFNPIAFTPLPVT) are Cytoplasmic-facing. The helical transmembrane segment at 25-45 (LITTIVYLAVLILVLVTYLVV) threads the bilayer. Topologically, residues 46–391 (PPAPTLEMSP…SAFAVFRLHT (346 aa)) are vacuolar. Asn59, Asn116, and Asn119 each carry an N-linked (GlcNAc...) asparagine glycan. The Zn(2+) site is built by His175 and Asp187. Glu221 acts as the Proton acceptor in catalysis. Position 222 (Glu222) interacts with Zn(2+). An N-linked (GlcNAc...) asparagine glycan is attached at Asn238. The Zn(2+) site is built by Glu247 and His320. The chain crosses the membrane as a helical span at residues 392–412 (LFALSVTLLVSAPLVLFITSI). The Cytoplasmic portion of the chain corresponds to 413–447 (ALSKTDRMYLFSMSKSLGGTSETVSLRGLRGLFRT). The helical transmembrane segment at 448-468 (PIILTVTTVITIGLAYLLEKI) threads the bilayer. Residues 469–475 (NPYIVHS) lie on the Vacuolar side of the membrane. The chain crosses the membrane as a helical span at residues 476 to 496 (SQFAVWSMMLSVWIFVAWFLA). Over 497–509 (RVADFFRPSALHR) the chain is Cytoplasmic. The chain crosses the membrane as a helical span at residues 510–530 (AYSYTWIFIATWIMLVISTVY). Over 531–534 (ANQK) the chain is Vacuolar. Residues 535-555 (GIAAGYFIFFYFAAVFLATWV) traverse the membrane as a helical segment. At 556–672 (SYLELFSLPR…WSWTLPRWTW (117 aa)) the chain is on the cytoplasmic side. Residues 579–621 (RRSSSLSSRLLTPSADELPSDIGPNGAENLGDPDETDPTESTS) form a disordered region. The helical transmembrane segment at 673–693 (ILQLLLLAPIVIILVGQVGLL) threads the bilayer. At 694 to 709 (LTTAMSQIGSDGVSTF) the chain is on the vacuolar side. Residues 710–730 (IVYLACALLSTLLFAPLFPFI) form a helical membrane-spanning segment. Over 731–737 (HRFTYHV) the chain is Cytoplasmic. The helical transmembrane segment at 738 to 758 (PTFLLLIFIGTLIYNLVAFPF) threads the bilayer. The Vacuolar segment spans residues 759 to 993 (SPANRLKIFF…VEASHDFIIQ (235 aa)). 3 N-linked (GlcNAc...) asparagine glycosylation sites follow: Asn806, Asn847, and Asn955.

It belongs to the peptidase M28 family. Zn(2+) is required as a cofactor.

Its subcellular location is the vacuole membrane. In terms of biological role, may be involved in vacuolar sorting and osmoregulation. This Paracoccidioides lutzii (strain ATCC MYA-826 / Pb01) (Paracoccidioides brasiliensis) protein is Vacuolar membrane protease.